The chain runs to 948 residues: Alanine--tRNA ligase (948 aa).

Zn(2+)-binding residues include His638, His642, Cys739, and His743.

Belongs to the class-II aminoacyl-tRNA synthetase family. It depends on Zn(2+) as a cofactor.

The protein localises to the cytoplasm. It catalyses the reaction tRNA(Ala) + L-alanine + ATP = L-alanyl-tRNA(Ala) + AMP + diphosphate. Catalyzes the attachment of alanine to tRNA(Ala) in a two-step reaction: alanine is first activated by ATP to form Ala-AMP and then transferred to the acceptor end of tRNA(Ala). Also edits incorrectly charged Ser-tRNA(Ala) and Gly-tRNA(Ala) via its editing domain. In Paracidovorax citrulli (strain AAC00-1) (Acidovorax citrulli), this protein is Alanine--tRNA ligase.